The sequence spans 364 residues: Methylenetetrahydrofolate--tRNA-(uracil-5-)-methyltransferase TrmFO (364 aa).

11 to 16 (GAGLAG) contributes to the FAD binding site. Residues 335–352 (SYLNQPCSSANDPTSSLL) show a composition bias toward polar residues. Positions 335–364 (SYLNQPCSSANDPTSSLLDRSPAQRDIPLQ) are disordered.

The protein belongs to the MnmG family. TrmFO subfamily. The cofactor is FAD.

Its subcellular location is the cytoplasm. The enzyme catalyses uridine(54) in tRNA + (6R)-5,10-methylene-5,6,7,8-tetrahydrofolate + NADH + H(+) = 5-methyluridine(54) in tRNA + (6S)-5,6,7,8-tetrahydrofolate + NAD(+). It catalyses the reaction uridine(54) in tRNA + (6R)-5,10-methylene-5,6,7,8-tetrahydrofolate + NADPH + H(+) = 5-methyluridine(54) in tRNA + (6S)-5,6,7,8-tetrahydrofolate + NADP(+). Catalyzes the folate-dependent formation of 5-methyl-uridine at position 54 (M-5-U54) in all tRNAs. The sequence is that of Methylenetetrahydrofolate--tRNA-(uracil-5-)-methyltransferase TrmFO from Prochlorococcus marinus (strain MIT 9313).